The following is a 193-amino-acid chain: Large ribosomal subunit protein uL18 (193 aa).

It belongs to the universal ribosomal protein uL18 family. In terms of assembly, part of the 50S ribosomal subunit. Contacts the 5S and 23S rRNAs.

In terms of biological role, this is one of the proteins that bind and probably mediate the attachment of the 5S RNA into the large ribosomal subunit, where it forms part of the central protuberance. This Methanobrevibacter smithii (strain ATCC 35061 / DSM 861 / OCM 144 / PS) protein is Large ribosomal subunit protein uL18.